Here is a 416-residue protein sequence, read N- to C-terminus: N-acetyl-L-cysteine deacetylase (416 aa).

Residues cysteine 128, histidine 130, glutamate 164, histidine 188, and histidine 380 each contribute to the Zn(2+) site.

It belongs to the peptidase M20 family. The cofactor is Zn(2+). Co(2+) serves as cofactor.

The catalysed reaction is N-acetyl-L-cysteine + H2O = L-cysteine + acetate. It functions in the pathway amino-acid metabolism. In terms of biological role, involved in a cysteine salvage pathway from S-alkylcysteine. Catalyzes the last step in this pathway, i.e. the deacetylation of N-acetyl-L-cysteine. This pathway is likely important in the catabolism of alkylated cysteine generated by proteolysis of alkylated glutathione formed in the detoxification of a wide range of electrophiles. The polypeptide is N-acetyl-L-cysteine deacetylase (Bacillus subtilis (strain 168)).